Here is a 43-residue protein sequence, read N- to C-terminus: Potassium channel toxin gamma-KTx 4.4 (43 aa).

Intrachain disulfides connect Cys-5–Cys-23, Cys-11–Cys-34, Cys-20–Cys-39, and Cys-24–Cys-41.

The protein belongs to the ergtoxin family. Gamma-KTx 4 subfamily. In terms of tissue distribution, expressed by the venom gland.

The protein resides in the secreted. Reversibly blocks Kv11/ERG potassium channels. The protein is Potassium channel toxin gamma-KTx 4.4 of Centruroides exilicauda (Bark scorpion).